Reading from the N-terminus, the 485-residue chain is Pyruvate kinase (485 aa).

R33 lines the substrate pocket. The K(+) site is built by N35, S37, D67, and T68. 35 to 38 is a binding site for ATP; sequence NFSH. Residues R74 and K155 each contribute to the ATP site. E221 provides a ligand contact to Mg(2+). G244, D245, and T277 together coordinate substrate. A Mg(2+)-binding site is contributed by D245.

Belongs to the pyruvate kinase family. In terms of assembly, homotetramer. It depends on Mg(2+) as a cofactor. The cofactor is K(+).

It catalyses the reaction pyruvate + ATP = phosphoenolpyruvate + ADP + H(+). The protein operates within carbohydrate degradation; glycolysis; pyruvate from D-glyceraldehyde 3-phosphate: step 5/5. This chain is Pyruvate kinase (pyk), found in Chlamydia trachomatis serovar L2 (strain ATCC VR-902B / DSM 19102 / 434/Bu).